Consider the following 445-residue polypeptide: V-type proton ATPase subunit H (445 aa).

This sequence belongs to the V-ATPase H subunit family. V-ATPase is a heteromultimeric enzyme composed of a peripheral catalytic V1 complex (components A to H) attached to an integral membrane V0 proton pore complex (components: a, c, c', c'' and d).

Functionally, subunit of the peripheral V1 complex of vacuolar ATPase. Subunit H activates the ATPase activity of the enzyme and couples ATPase activity to proton flow. Vacuolar ATPase is responsible for acidifying a variety of intracellular compartments in eukaryotic cells, thus providing most of the energy required for transport processes in the vacuolar system. This chain is V-type proton ATPase subunit H (vatH), found in Dictyostelium discoideum (Social amoeba).